Consider the following 382-residue polypeptide: Protein RecA (382 aa).

79–86 (GPESSGKT) contributes to the ATP binding site.

Belongs to the RecA family.

The protein localises to the cytoplasm. In terms of biological role, can catalyze the hydrolysis of ATP in the presence of single-stranded DNA, the ATP-dependent uptake of single-stranded DNA by duplex DNA, and the ATP-dependent hybridization of homologous single-stranded DNAs. It interacts with LexA causing its activation and leading to its autocatalytic cleavage. The protein is Protein RecA of Streptococcus sanguinis (strain SK36).